A 138-amino-acid polypeptide reads, in one-letter code: Small ribosomal subunit protein uS9c (138 aa).

Belongs to the universal ribosomal protein uS9 family.

The protein resides in the plastid. The protein localises to the chloroplast. The protein is Small ribosomal subunit protein uS9c (rps9) of Phaeodactylum tricornutum (strain CCAP 1055/1).